The sequence spans 717 residues: Choline transporter-like protein 5 (717 aa).

Residues 1 to 24 (MNDTEKPADTASEEEDFGDPRTYD) are disordered. The Cytoplasmic portion of the chain corresponds to 1-38 (MNDTEKPADTASEEEDFGDPRTYDPDFKGPVSNRSCTD). A helical transmembrane segment spans residues 39–59 (VLCCMIFLLCIVGYIVLGLVA). Topologically, residues 60–242 (WVHGDPRRAA…KVFEDYATTW (183 aa)) are extracellular. 2 N-linked (GlcNAc...) asparagine glycosylation sites follow: Asn-88 and Asn-190. A helical membrane pass occupies residues 243 to 263 (YWILIGLMIAMVLSWIFLILL). Topologically, residues 264–265 (RF) are cytoplasmic. The helical transmembrane segment at 266–286 (IAGCLFWVFMIGVIGIIGYGI) threads the bilayer. The Extracellular segment spans residues 287-325 (WHCYQQYTNLQEHPRSVLTVYDIGIQTNISMYFELQQTW). The N-linked (GlcNAc...) asparagine glycan is linked to Asn-314. A helical transmembrane segment spans residues 326–346 (FTLMIILCIIEVIVILMLIFL). Over 347–351 (RNRIR) the chain is Cytoplasmic. The helical transmembrane segment at 352–372 (VAIILLKEGSKAIGYVPSTLV) threads the bilayer. Topologically, residues 373-374 (YP) are extracellular. A helical membrane pass occupies residues 375-395 (ALTFILLSICICYWVVTAVFL). Over 396–460 (ATSGVPVYKV…QYIPTFHVYN (65 aa)) the chain is Cytoplasmic. The helical transmembrane segment at 461 to 481 (LFVFLWLINFVIALGQCALAG) threads the bilayer. Topologically, residues 482-515 (AFATYYWAMKKPDDIPRYPLFTAFGRAIRYHTGS) are extracellular. The helical transmembrane segment at 516 to 536 (LAFGSLIIALIQMFKIVLEYL) threads the bilayer. Residues 537 to 610 (NHRLKRTENT…KVAVTDEVTY (74 aa)) lie on the Cytoplasmic side of the membrane. The chain crosses the membrane as a helical span at residues 611–631 (FVLFLGKILVAGSIGVLAFLF). Topologically, residues 632–649 (FTQRLPVIAQGPASLNYY) are extracellular. Residues 650 to 670 (WVPLLTVILGSYLIAHGFFSV) form a helical membrane-spanning segment. Residues 671-717 (YAMCVETIFICFLEDLERNDGSTARPYYVSQPLLKIFQEENLQTKQQ) are Cytoplasmic-facing.

This sequence belongs to the CTL (choline transporter-like) family.

Its subcellular location is the cell membrane. It carries out the reaction choline(out) + n H(+)(in) = choline(in) + n H(+)(out). In terms of biological role, choline/H+ antiporter. In Macaca fascicularis (Crab-eating macaque), this protein is Choline transporter-like protein 5 (SLC44A5).